Here is a 216-residue protein sequence, read N- to C-terminus: Ribosomal RNA large subunit methyltransferase E (216 aa).

Positions 60, 62, 80, 96, and 121 each coordinate S-adenosyl-L-methionine. Lysine 161 (proton acceptor) is an active-site residue.

It belongs to the class I-like SAM-binding methyltransferase superfamily. RNA methyltransferase RlmE family.

It localises to the cytoplasm. The catalysed reaction is uridine(2552) in 23S rRNA + S-adenosyl-L-methionine = 2'-O-methyluridine(2552) in 23S rRNA + S-adenosyl-L-homocysteine + H(+). Specifically methylates the uridine in position 2552 of 23S rRNA at the 2'-O position of the ribose in the fully assembled 50S ribosomal subunit. The sequence is that of Ribosomal RNA large subunit methyltransferase E from Pseudomonas fluorescens (strain SBW25).